The sequence spans 480 residues: LETM1 domain-containing protein LETM2, mitochondrial (480 aa).

The transit peptide at 1–25 (MAFYSYNSFLAIFWTRLPGHSVYPS) directs the protein to the mitochondrion. Over 26 to 175 (CSHFPSLAFL…LLRTCADVFR (150 aa)) the chain is Mitochondrial intermembrane. The tract at residues 88–118 (GKPQLEQTGKPKAASPQPTKEAKTETTEEKR) is disordered. A compositionally biased stretch (basic and acidic residues) spans 107–118 (KEAKTETTEEKR). Residues 176 to 196 (LVPFMVFIIVPFMEFLIPVFL) form a helical membrane-spanning segment. Residues 197-480 (KLFPDMLPST…QNSKADSKGA (284 aa)) are Mitochondrial matrix-facing. The region spanning 219 to 436 (KTMAAKLEIA…SAPQLKGTKD (218 aa)) is the Letm1 RBD domain. Residues 398–444 (ELPPNIETPKPNLGIPTPPPPESKENLTDSAPQLKGTKDEEFIQLPP) form a disordered region.

The protein localises to the mitochondrion inner membrane. In Mus musculus (Mouse), this protein is LETM1 domain-containing protein LETM2, mitochondrial (Letm2).